The primary structure comprises 187 residues: Crossover junction endodeoxyribonuclease RuvC (187 aa).

Active-site residues include aspartate 7, glutamate 67, and aspartate 140. Mg(2+) contacts are provided by aspartate 7, glutamate 67, and aspartate 140.

This sequence belongs to the RuvC family. Homodimer which binds Holliday junction (HJ) DNA. The HJ becomes 2-fold symmetrical on binding to RuvC with unstacked arms; it has a different conformation from HJ DNA in complex with RuvA. In the full resolvosome a probable DNA-RuvA(4)-RuvB(12)-RuvC(2) complex forms which resolves the HJ. It depends on Mg(2+) as a cofactor.

The protein resides in the cytoplasm. It catalyses the reaction Endonucleolytic cleavage at a junction such as a reciprocal single-stranded crossover between two homologous DNA duplexes (Holliday junction).. Functionally, the RuvA-RuvB-RuvC complex processes Holliday junction (HJ) DNA during genetic recombination and DNA repair. Endonuclease that resolves HJ intermediates. Cleaves cruciform DNA by making single-stranded nicks across the HJ at symmetrical positions within the homologous arms, yielding a 5'-phosphate and a 3'-hydroxyl group; requires a central core of homology in the junction. The consensus cleavage sequence is 5'-(A/T)TT(C/G)-3'. Cleavage occurs on the 3'-side of the TT dinucleotide at the point of strand exchange. HJ branch migration catalyzed by RuvA-RuvB allows RuvC to scan DNA until it finds its consensus sequence, where it cleaves and resolves the cruciform DNA. This is Crossover junction endodeoxyribonuclease RuvC from Prosthecochloris aestuarii (strain DSM 271 / SK 413).